We begin with the raw amino-acid sequence, 324 residues long: Gamma-soluble NSF attachment protein (324 aa).

Residues 285 to 298 are compositionally biased toward polar residues; it reads NPTINSTAPQQQYS. The interval 285-324 is disordered; that stretch reads NPTINSTAPQQQYSNTTTTTTNNTNNNNPTSQQDDDEDVL. Positions 299-312 are enriched in low complexity; the sequence is NTTTTTTNNTNNNN.

This sequence belongs to the SNAP family. As to quaternary structure, interacts with nsfA and probably SNARE proteins.

The protein localises to the cytoplasmic vesicle membrane. Functionally, may be required for vesicular transport between the endoplasmic reticulum and the Golgi apparatus. Involved in vesicle fusion with nsfA and probably SNARE proteins. The chain is Gamma-soluble NSF attachment protein (snpC) from Dictyostelium discoideum (Social amoeba).